Here is a 210-residue protein sequence, read N- to C-terminus: Probable GTP-binding protein EngB (210 aa).

The EngB-type G domain maps to glutamine 30–leucine 204. GTP-binding positions include glycine 38–serine 45, glycine 64–leucine 68, aspartate 82–glycine 85, threonine 149–aspartate 152, and leucine 182–alanine 185. Mg(2+)-binding residues include serine 45 and threonine 66.

The protein belongs to the TRAFAC class TrmE-Era-EngA-EngB-Septin-like GTPase superfamily. EngB GTPase family. Requires Mg(2+) as cofactor.

Its function is as follows. Necessary for normal cell division and for the maintenance of normal septation. In Pseudomonas putida (strain ATCC 47054 / DSM 6125 / CFBP 8728 / NCIMB 11950 / KT2440), this protein is Probable GTP-binding protein EngB.